The primary structure comprises 256 residues: Imidazole glycerol phosphate synthase subunit HisF (256 aa).

Active-site residues include aspartate 13 and aspartate 132.

It belongs to the HisA/HisF family. In terms of assembly, heterodimer of HisH and HisF.

The protein resides in the cytoplasm. The enzyme catalyses 5-[(5-phospho-1-deoxy-D-ribulos-1-ylimino)methylamino]-1-(5-phospho-beta-D-ribosyl)imidazole-4-carboxamide + L-glutamine = D-erythro-1-(imidazol-4-yl)glycerol 3-phosphate + 5-amino-1-(5-phospho-beta-D-ribosyl)imidazole-4-carboxamide + L-glutamate + H(+). It functions in the pathway amino-acid biosynthesis; L-histidine biosynthesis; L-histidine from 5-phospho-alpha-D-ribose 1-diphosphate: step 5/9. In terms of biological role, IGPS catalyzes the conversion of PRFAR and glutamine to IGP, AICAR and glutamate. The HisF subunit catalyzes the cyclization activity that produces IGP and AICAR from PRFAR using the ammonia provided by the HisH subunit. In Leptospira borgpetersenii serovar Hardjo-bovis (strain JB197), this protein is Imidazole glycerol phosphate synthase subunit HisF.